The sequence spans 865 residues: Fatty acyl-CoA synthetase and RNA processing-associated kinase 1 (865 aa).

Residues 41-313 (YILGSTLGEG…LKQIKKHEWL (273 aa)) form the Protein kinase domain. Residues 47 to 55 (LGEGEFGKV) and Lys80 each bind ATP. The active-site Proton acceptor is Asp175. The disordered stretch occupies residues 341-398 (KPRRRYGSRPQSSCSTSSLGSRSDKRDSLVIDSTLITFPAPPQESQNHIITRPASIAS). Positions 352-361 (SSCSTSSLGS) are enriched in low complexity. Residue Ser441 is modified to Phosphoserine. Disordered stretches follow at residues 480–554 (ISGS…YTTP), 673–733 (TEES…LNEA), and 754–782 (SLYS…YQTN). Over residues 494–538 (STTMQTSKIQPNNMASSQNHQYNKNKTQNSLQSAKNFYRTSSSSH) the composition is skewed to polar residues. 2 stretches are compositionally biased toward basic and acidic residues: residues 690–708 (EGQE…EKGS) and 724–733 (NHLERSLNEA).

The protein belongs to the protein kinase superfamily. Ser/Thr protein kinase family. Interacts with FAA3, POL5 and TPA1.

The protein resides in the cytoplasm. The enzyme catalyses L-seryl-[protein] + ATP = O-phospho-L-seryl-[protein] + ADP + H(+). It catalyses the reaction L-threonyl-[protein] + ATP = O-phospho-L-threonyl-[protein] + ADP + H(+). Its function is as follows. Putative serine/threonine-protein kinase that may be involved in rRNA transcription and ribosome biogenesis. The polypeptide is Fatty acyl-CoA synthetase and RNA processing-associated kinase 1 (FRK1) (Saccharomyces cerevisiae (strain ATCC 204508 / S288c) (Baker's yeast)).